The primary structure comprises 487 residues: b(0,+)-type amino acid transporter 1 (487 aa).

Residues 1–20 (MEETSPRRRREDEKSVHSTE) show a composition bias toward basic and acidic residues. Positions 1 to 23 (MEETSPRRRREDEKSVHSTEPKT) are disordered. Residues 1-31 (MEETSPRRRREDEKSVHSTEPKTTSLQKEVG) lie on the Cytoplasmic side of the membrane. Serine 18 is modified (phosphoserine). The chain crosses the membrane as a helical span at residues 32-55 (LLSGICIIVGTIIGSGIFISPKSV). Residue 43–47 (IIGSG) participates in L-arginine binding. Residues 56 to 62 (LANTESV) lie on the Extracellular side of the membrane. Residues 63 to 84 (GPCLIIWAACGVLATLGALCFA) traverse the membrane as a helical segment. The Cytoplasmic portion of the chain corresponds to 85–110 (ELGTMITKSGGEYPYLMEAFGPIPAY). Residues 111 to 137 (LFSWTSLIVMKPSSFAIICLSFSEYVC) form a helical membrane-spanning segment. Residues 138–147 (AAFYLGCRPP) are Extracellular-facing. 2 helical membrane passes run 148-169 (AVVV…NALS) and 170-193 (VRLG…IIII). At 194-217 (SGLVLLAQGNVKNFQNSFEGSQTS) the chain is on the extracellular side. A helical transmembrane segment spans residues 218–238 (VGSISLAFYNGLWAYDGWNQL). An L-arginine-binding site is contributed by aspartate 233. The Cytoplasmic segment spans residues 239–251 (NYITEELRNPYRN). A helical membrane pass occupies residues 252-274 (LPMAIVIGIPLVTVCYILMNIAY). Over 275–302 (FTVMTPTELLQSQAVAVTFGDRVLYPAS) the chain is Extracellular. Residues 303–325 (WVVPLFVAFSTIGAANGTCFTAG) form a helical membrane-spanning segment. Over 326–351 (RLIYVAGREGHMLKVLSYISVKRLTP) the chain is Cytoplasmic. Helical transmembrane passes span 352 to 370 (APAL…IPGD) and 371 to 391 (INSL…MTIL). The Cytoplasmic segment spans residues 392 to 410 (GLVVMRFTRKDLERPIKVP). A helical transmembrane segment spans residues 411 to 431 (IFIPIIVILVSVFLILAPIIS). The Extracellular segment spans residues 432 to 434 (SPA). A helical membrane pass occupies residues 435 to 450 (WEYLYCVLFILSGLIF). Over 451 to 487 (YFLFVHYKFRWAQKISRPITKHLQMLMEVVPPEKDPE) the chain is Cytoplasmic.

This sequence belongs to the amino acid-polyamine-organocation (APC) superfamily. In terms of assembly, disulfide-linked heterodimer composed of the catalytic light chain subunit SLC7A9 and the heavy chain subunit SLC3A1. The heterodimer is the minimal functional unit. Assembles in heterotetramers (dimers of heterodimers) and higher order oligomers; the oligomerization is mediated by SLC3A1 likely to prevent degradation and facilitate heteromer trafficking to the plasma membrane. Interacts with CAV1. Outer medulla of kidney (at protein level). Kidney and small intestine. In the kidney localized to the apical membrane of the proximal tubules.

Its subcellular location is the apical cell membrane. The enzyme catalyses L-leucine(out) + L-arginine(in) = L-leucine(in) + L-arginine(out). The catalysed reaction is L-histidine(out) + L-arginine(in) = L-histidine(in) + L-arginine(out). It catalyses the reaction L-arginine(in) + L-phenylalanine(out) = L-arginine(out) + L-phenylalanine(in). It carries out the reaction L-cysteine(out) + L-arginine(in) = L-cysteine(in) + L-arginine(out). The enzyme catalyses L-cystine(out) + L-arginine(in) = L-cystine(in) + L-arginine(out). The catalysed reaction is L-lysine(out) + L-arginine(in) = L-lysine(in) + L-arginine(out). In terms of biological role, associates with SLC3A1 to form a functional transporter complex that mediates the electrogenic exchange between cationic amino acids and neutral amino acids, with a stoichiometry of 1:1. Has system b(0,+)-like activity with high affinity for extracellular cationic amino acids and L-cystine and lower affinity for intracellular neutral amino acids. Substrate exchange is driven by high concentration of intracellular neutral amino acids and the intracellular reduction of L-cystine to L-cysteine. Required for reabsorption of L-cystine and dibasic amino acids across the brush border membrane in renal proximal tubules. This is b(0,+)-type amino acid transporter 1 (Slc7a9) from Rattus norvegicus (Rat).